The following is a 374-amino-acid chain: Chaperone protein DnaJ (374 aa).

The J domain maps to 5 to 70 (DYYEVLGVER…SKRAAFDQYG (66 aa)). A CR-type zinc finger spans residues 133–211 (GTTVSIRVPT…CHGEGRVEEY (79 aa)). The Zn(2+) site is built by Cys146, Cys149, Cys163, Cys166, Cys185, Cys188, Cys199, and Cys202. CXXCXGXG motif repeat units follow at residues 146–153 (CQPCDGSG), 163–170 (CPTCGGIG), 185–192 (CPRCHGQG), and 199–206 (CTSCHGEG).

This sequence belongs to the DnaJ family. As to quaternary structure, homodimer. Zn(2+) is required as a cofactor.

The protein resides in the cytoplasm. Its function is as follows. Participates actively in the response to hyperosmotic and heat shock by preventing the aggregation of stress-denatured proteins and by disaggregating proteins, also in an autonomous, DnaK-independent fashion. Unfolded proteins bind initially to DnaJ; upon interaction with the DnaJ-bound protein, DnaK hydrolyzes its bound ATP, resulting in the formation of a stable complex. GrpE releases ADP from DnaK; ATP binding to DnaK triggers the release of the substrate protein, thus completing the reaction cycle. Several rounds of ATP-dependent interactions between DnaJ, DnaK and GrpE are required for fully efficient folding. Also involved, together with DnaK and GrpE, in the DNA replication of plasmids through activation of initiation proteins. In Pseudomonas putida (strain GB-1), this protein is Chaperone protein DnaJ.